Consider the following 195-residue polypeptide: Protein lin-28 homolog A (195 aa).

Residues glutamine 33–proline 106 form the CSD domain. Residues leucine 98 to arginine 127 form a disordered region. The interval glycine 107–glycine 130 is flexible linker. The span at proline 118 to arginine 127 shows a compositional bias: basic residues. 2 consecutive CCHC-type zinc fingers follow at residues aspartate 131–leucine 148 and lysine 153–glutamate 170. Zn(2+) is bound by residues cysteine 133, cysteine 136, histidine 141, cysteine 146, cysteine 155, cysteine 158, histidine 163, and cysteine 168.

This sequence belongs to the lin-28 family. In terms of assembly, monomer.

The protein resides in the cytoplasm. It localises to the rough endoplasmic reticulum. The protein localises to the P-body. It is found in the stress granule. Its subcellular location is the nucleus. The protein resides in the nucleolus. In terms of biological role, RNA-binding protein that inhibits processing of pre-let-7 miRNAs and regulates translation of mRNAs that control developmental timing, pluripotency and metabolism. Seems to recognize a common structural G-quartet (G4) feature in its miRNA and mRNA targets. 'Translational enhancer' that drives specific mRNAs to polysomes and increases the efficiency of protein synthesis. Its association with the translational machinery and target mRNAs results in an increased number of initiation events per molecule of mRNA and, indirectly, in mRNA stabilization. Suppressor of microRNA (miRNA) biogenesis, including that of let-7. Binds specific target miRNA precursors (pre-miRNAs), recognizing an 5'-GGAG-3' motif found in their terminal loop, and recruits uridylyltransferase. This results in the terminal uridylation of target pre-miRNAs. Uridylated pre-miRNAs fail to be processed by Dicer and undergo degradation. Localized to the periendoplasmic reticulum area, binds to a large number of spliced mRNAs and inhibits the translation of mRNAs destined for the ER, reducing the synthesis of transmembrane proteins, ER or Golgi lumen proteins, and secretory proteins. Binds to and enhances the translation of mRNAs for several metabolic enzymes, increasing glycolysis and oxidative phosphorylation. Which, with the let-7 repression may enhance tissue repair in adult tissue. This Xenopus laevis (African clawed frog) protein is Protein lin-28 homolog A (lin28a).